A 356-amino-acid chain; its full sequence is Histidinol-phosphate aminotransferase (356 aa).

The residue at position 214 (lysine 214) is an N6-(pyridoxal phosphate)lysine.

The protein belongs to the class-II pyridoxal-phosphate-dependent aminotransferase family. Histidinol-phosphate aminotransferase subfamily. As to quaternary structure, homodimer. Pyridoxal 5'-phosphate is required as a cofactor.

It carries out the reaction L-histidinol phosphate + 2-oxoglutarate = 3-(imidazol-4-yl)-2-oxopropyl phosphate + L-glutamate. It participates in amino-acid biosynthesis; L-histidine biosynthesis; L-histidine from 5-phospho-alpha-D-ribose 1-diphosphate: step 7/9. This chain is Histidinol-phosphate aminotransferase, found in Escherichia coli O6:K15:H31 (strain 536 / UPEC).